Reading from the N-terminus, the 189-residue chain is Tumor protein p53-inducible protein 11 (189 aa).

Topologically, residues 1-63 (MAGKQPPPLM…FAVREPLGLR (63 aa)) are cytoplasmic. Ser-14 is modified (phosphoserine). A helical membrane pass occupies residues 64–84 (VWQFLSAMLFSSVAIMALALP). Residues 85–108 (DQLYDAVFDGAEVTSKTPIRLYGG) are Extracellular-facing. Residues 109-129 (ALLSISLIMWNALYTAEKVII) form a helical membrane-spanning segment. Arg-130 is a topological domain (cytoplasmic). The helical transmembrane segment at 131–151 (WTLLTEACYFGVQSLVVTATL) threads the bilayer. The Extracellular portion of the chain corresponds to 152–155 (AETG). The chain crosses the membrane as a helical span at residues 156–176 (LMSLGTVLLLASRLLFVIVSI). At 177–189 (YYYYQVGRKPKKV) the chain is on the cytoplasmic side.

It is found in the membrane. This is Tumor protein p53-inducible protein 11 (Trp53i11) from Mus musculus (Mouse).